Here is a 424-residue protein sequence, read N- to C-terminus: Hemagglutinin-esterase (424 aa).

Signal peptides lie at residues 1-16 and 1-18; these read MFLL…IIGS and MFLL…GSLG. The esterase domain 1 stretch occupies residues 7 to 127; sequence FVLVSCIIGS…SNDIWMQNKG (121 aa). Residues 17–392 lie on the Virion surface side of the membrane; sequence LGFDNPPTNV…PICVYDPLPL (376 aa). The active-site Nucleophile is S40. The cysteines at positions 44 and 65 are disulfide-linked. 5 N-linked (GlcNAc...) asparagine; by host glycosylation sites follow: N54, N89, N153, N236, and N301. Cystine bridges form between C113–C162, C197–C276, and C205–C249. Residues 128 to 266 form a receptor binding region; the sequence is LFYTQVYKNM…GNYLAISNEL (139 aa). Positions 267–379 are esterase domain 2; sequence LLTVPTKAIC…RCPTAADINT (113 aa). An intrachain disulfide couples C307 to C312. N316 carries an N-linked (GlcNAc...) asparagine; by host glycan. Catalysis depends on charge relay system residues D326 and H329. An intrachain disulfide couples C347 to C371. N358 carries N-linked (GlcNAc...) asparagine; by host glycosylation. A helical membrane pass occupies residues 393–413; it reads ILLGILLGVAVIIIVVLLLYF. The Intravirion segment spans residues 414-424; that stretch reads MVDNGTRLHDA. N-linked (GlcNAc...) asparagine; by host glycosylation occurs at N417.

This sequence belongs to the influenza type C/coronaviruses hemagglutinin-esterase family. Homodimer; disulfide-linked. Forms a complex with the M protein in the pre-Golgi. Associates then with S-M complex to form a ternary complex S-M-HE. Post-translationally, N-glycosylated in the host RER.

Its subcellular location is the virion membrane. The protein resides in the host cell membrane. It carries out the reaction N-acetyl-9-O-acetylneuraminate + H2O = N-acetylneuraminate + acetate + H(+). It catalyses the reaction N-acetyl-4-O-acetylneuraminate + H2O = N-acetylneuraminate + acetate + H(+). In terms of biological role, structural protein that makes short spikes at the surface of the virus. Contains receptor binding and receptor-destroying activities. Mediates de-O-acetylation of N-acetyl-4-O-acetylneuraminic acid, which is probably the receptor determinant recognized by the virus on the surface of erythrocytes and susceptible cells. This receptor-destroying activity is important for virus release as it probably helps preventing self-aggregation and ensures the efficient spread of the progeny virus from cell to cell. May serve as a secondary viral attachment protein for initiating infection, the spike protein being the major one. May become a target for both the humoral and the cellular branches of the immune system. The protein is Hemagglutinin-esterase of Bos taurus (Bovine).